The primary structure comprises 126 residues: Arginine decarboxylase proenzyme (126 aa).

S74 functions as the Schiff-base intermediate with substrate; via pyruvic acid in the catalytic mechanism. Pyruvic acid (Ser); by autocatalysis is present on S74. H79 acts as the Proton acceptor; for processing activity in catalysis. C94 functions as the Proton donor; for catalytic activity in the catalytic mechanism.

Belongs to the prokaryotic AdoMetDC family. Type 1 subfamily. Heterooctamer of four alpha and four beta chains arranged as a tetramer of alpha/beta heterodimers. It depends on pyruvate as a cofactor. Post-translationally, is synthesized initially as an inactive proenzyme. Formation of the active enzyme involves a self-maturation process in which the active site pyruvoyl group is generated from an internal serine residue via an autocatalytic post-translational modification. Two non-identical subunits are generated from the proenzyme in this reaction, and the pyruvate is formed at the N-terminus of the alpha chain, which is derived from the carboxyl end of the proenzyme. The post-translation cleavage follows an unusual pathway, termed non-hydrolytic serinolysis, in which the side chain hydroxyl group of the serine supplies its oxygen atom to form the C-terminus of the beta chain, while the remainder of the serine residue undergoes an oxidative deamination to produce ammonia and the pyruvoyl group blocking the N-terminus of the alpha chain.

The catalysed reaction is L-arginine + H(+) = agmatine + CO2. It functions in the pathway amine and polyamine biosynthesis; agmatine biosynthesis; agmatine from L-arginine: step 1/1. Its function is as follows. Specifically catalyzes the decarboxylation of L-arginine to agmatine. Has no S-adenosylmethionine decarboxylase (AdoMetDC) activity. The protein is Arginine decarboxylase proenzyme of Pyrobaculum calidifontis (strain DSM 21063 / JCM 11548 / VA1).